A 423-amino-acid polypeptide reads, in one-letter code: ATP-citrate synthase alpha chain protein 2 (423 aa).

The citrate site is built by Asn-343, Thr-345, and Arg-376.

It belongs to the succinate/malate CoA ligase beta subunit family. As to quaternary structure, heterooctamer of 4 alpha and 4 beta chains.

The protein localises to the cytoplasm. The protein resides in the cytosol. The catalysed reaction is oxaloacetate + acetyl-CoA + ADP + phosphate = citrate + ATP + CoA. ATP citrate-lyase is the primary enzyme responsible for the synthesis of cytosolic acetyl-CoA, used for the elongation of fatty acids and biosynthesis of isoprenoids, flavonoids and malonated derivatives. May supply substrate to the cytosolic acetyl-CoA carboxylase, which generates the malonyl-CoA used for the synthesis of a multitude of compounds, including very long chain fatty acids and flavonoids. Required for normal growth and development and elongation of C18 fatty acids to C20 to C24 fatty acids in seeds. In contrast to all known animal ACL enzymes having a homomeric structure, plant ACLs are composed of alpha and beta chains. The protein is ATP-citrate synthase alpha chain protein 2 (ACLA-2) of Arabidopsis thaliana (Mouse-ear cress).